We begin with the raw amino-acid sequence, 154 residues long: Aspartate carbamoyltransferase regulatory chain (154 aa).

The Zn(2+) site is built by cysteine 109, cysteine 114, cysteine 138, and cysteine 141.

This sequence belongs to the PyrI family. Contains catalytic and regulatory chains. It depends on Zn(2+) as a cofactor.

Functionally, involved in allosteric regulation of aspartate carbamoyltransferase. The chain is Aspartate carbamoyltransferase regulatory chain from Pectobacterium carotovorum subsp. carotovorum (strain PC1).